The sequence spans 154 residues: Myoglobin (154 aa).

Positions 2-148 (GLSDGEWQLV…FRNDMAAKYK (147 aa)) constitute a Globin domain. Ser4 carries the post-translational modification Phosphoserine. His65 contacts nitrite. His65 lines the O2 pocket. The residue at position 68 (Thr68) is a Phosphothreonine. His94 provides a ligand contact to heme b.

This sequence belongs to the globin family. Monomeric.

It is found in the cytoplasm. The protein resides in the sarcoplasm. The catalysed reaction is Fe(III)-heme b-[protein] + nitric oxide + H2O = Fe(II)-heme b-[protein] + nitrite + 2 H(+). It carries out the reaction H2O2 + AH2 = A + 2 H2O. Monomeric heme protein which primary function is to store oxygen and facilitate its diffusion within muscle tissues. Reversibly binds oxygen through a pentacoordinated heme iron and enables its timely and efficient release as needed during periods of heightened demand. Depending on the oxidative conditions of tissues and cells, and in addition to its ability to bind oxygen, it also has a nitrite reductase activity whereby it regulates the production of bioactive nitric oxide. Under stress conditions, like hypoxia and anoxia, it also protects cells against reactive oxygen species thanks to its pseudoperoxidase activity. The chain is Myoglobin (MB) from Ochotona princeps (Southern American pika).